Here is a 398-residue protein sequence, read N- to C-terminus: Putative F-box protein At1g67450 (398 aa).

The 55-residue stretch at 2–56 (TMMMSDLPNDLVEEILSRVPITSLGAVRSTCKRWNGLSKDRIVCKGDANQQFTGF) folds into the F-box domain.

This Arabidopsis thaliana (Mouse-ear cress) protein is Putative F-box protein At1g67450.